The primary structure comprises 445 residues: Rab GDP dissociation inhibitor beta (445 aa).

Residue M1 is modified to N-acetylmethionine. An N6-succinyllysine modification is found at K57. S61 is subject to Phosphoserine. K112 carries the post-translational modification N6-acetyllysine. At S130 the chain carries Phosphoserine. Residue K269 is modified to N6-acetyllysine. S382 bears the Phosphoserine mark.

It belongs to the Rab GDI family. Interacts with RHOH. Interacts with the GDP-bound inactive forms of RAB3A, RAB3B, RAB3C, RAB5A, RAB5B, RAB5C, RAB8A, RAB8B, RAB10, RAB12, RAB35, and RAB43; binds RAB3D to a lesser extent. Interacts with DZIP1; this interaction negatively regulates the interaction of GDI2 with GDP-bound RAB8A. In terms of tissue distribution, ubiquitous.

Its subcellular location is the cytoplasm. The protein localises to the membrane. It is found in the golgi apparatus. It localises to the trans-Golgi network. GDP-dissociation inhibitor preventing the GDP to GTP exchange of most Rab proteins. By keeping these small GTPases in their inactive GDP-bound form regulates intracellular membrane trafficking. Negatively regulates protein transport to the cilium and ciliogenesis through the inhibition of RAB8A. The protein is Rab GDP dissociation inhibitor beta (GDI2) of Homo sapiens (Human).